The following is a 167-amino-acid chain: Ribosome-binding factor A (167 aa).

A disordered region spans residues Ser127–Ala167. Positions Pro145–Ala167 are enriched in acidic residues.

The protein belongs to the RbfA family. As to quaternary structure, monomer. Binds 30S ribosomal subunits, but not 50S ribosomal subunits or 70S ribosomes.

It is found in the cytoplasm. One of several proteins that assist in the late maturation steps of the functional core of the 30S ribosomal subunit. Associates with free 30S ribosomal subunits (but not with 30S subunits that are part of 70S ribosomes or polysomes). Required for efficient processing of 16S rRNA. May interact with the 5'-terminal helix region of 16S rRNA. In Bifidobacterium adolescentis (strain ATCC 15703 / DSM 20083 / NCTC 11814 / E194a), this protein is Ribosome-binding factor A.